A 92-amino-acid polypeptide reads, in one-letter code: UPF0235 protein PF1765 (92 aa).

The protein belongs to the UPF0235 family.

In Pyrococcus furiosus (strain ATCC 43587 / DSM 3638 / JCM 8422 / Vc1), this protein is UPF0235 protein PF1765.